Consider the following 122-residue polypeptide: Large ribosomal subunit protein uL14 (122 aa).

It belongs to the universal ribosomal protein uL14 family. Part of the 50S ribosomal subunit. Forms a cluster with proteins L3 and L19. In the 70S ribosome, L14 and L19 interact and together make contacts with the 16S rRNA in bridges B5 and B8.

In terms of biological role, binds to 23S rRNA. Forms part of two intersubunit bridges in the 70S ribosome. This Mycoplasma capricolum subsp. capricolum (strain California kid / ATCC 27343 / NCTC 10154) protein is Large ribosomal subunit protein uL14.